Consider the following 323-residue polypeptide: Replication-associated protein A (323 aa).

Positions Arg-18–Tyr-121 constitute a CRESS-DNA virus Rep endonuclease domain. An RCR-1 motif is present at residues Phe-25–Tyr-28. Positions 59, 67, and 69 each coordinate a divalent metal cation. The RCR-2 signature appears at His-67–His-69. The active-site For DNA cleavage activity is the Tyr-107. Positions Tyr-107 to Lys-110 match the RCR-3 motif. Asp-111 contacts a divalent metal cation. The oligomerization stretch occupies residues Ser-181 to Tyr-193. Positions Leu-204 to Glu-208 match the LXCXE motif, interaction with host RBR1 motif. A disordered region spans residues Lys-256–Thr-286.

This sequence belongs to the geminiviridae Rep protein family. In terms of assembly, homooligomer. Interacts (via LXCXE domain) with host retinoblastoma-related protein 1 (RBR1), and may thereby deregulate the host cell cycle. Part of the C- and V-complexes which are RepA-Rep-DNA complexes involved in the c-sense and v-sense transcription. Mg(2+) serves as cofactor. It depends on Mn(2+) as a cofactor.

Its subcellular location is the host nucleus. The protein localises to the host cytoplasm. Implicated in enhancement of V-sense gene expression. Acts a an inhibitor of C-sense gene transcription. The polypeptide is Replication-associated protein A (Megathyrsus maximus (PanSV)).